We begin with the raw amino-acid sequence, 522 residues long: Transcription factor SPT20 homolog (522 aa).

Serine 284 is modified (phosphoserine). Disordered regions lie at residues 361 to 380 and 408 to 522; these read DEESDSQMSPSHSSTDDHSN and PVKM…RHES. A compositionally biased stretch (low complexity) spans 412–425; that stretch reads SHSSSGSASLSQVS. The span at 433–442 shows a compositional bias: polar residues; sequence TETVSVQSSV. The segment covering 458 to 467 has biased composition (low complexity); it reads SSSGNSSSGN. The span at 481 to 492 shows a compositional bias: pro residues; the sequence is PTPPPSSKPPTI. Threonine 482 carries the post-translational modification Phosphothreonine. Over residues 506 to 522 the composition is skewed to low complexity; that stretch reads LSPAALSPASSSQRHES. Residues serine 507 and serine 512 each carry the phosphoserine modification.

It belongs to the SPT20 family. In terms of assembly, interacts with ATG9A. Interacts with MAPK14.

Functionally, required for MAP kinase p38 (MAPK11, MAPK12, MAPK13 and/or MAPK14) activation during gastrulation. Required for down-regulation of E-cadherin during gastrulation by regulating E-cadherin protein level downstream from NCK-interacting kinase (NIK) and independently of the regulation of transcription by FGF signaling and Snail. Required for starvation-induced ATG9A trafficking during autophagy. The chain is Transcription factor SPT20 homolog (SUPT20H) from Pongo abelii (Sumatran orangutan).